The chain runs to 271 residues: Cyclase-like protein 3 (271 aa).

The N-terminal stretch at 1–21 (MYHLLIIITTLSFSSINITFA) is a signal peptide.

This sequence belongs to the Cyclase 1 superfamily.

It localises to the secreted. The protein localises to the extracellular space. It is found in the extracellular matrix. The sequence is that of Cyclase-like protein 3 from Arabidopsis thaliana (Mouse-ear cress).